Here is a 109-residue protein sequence, read N- to C-terminus: U-scoloptoxin(16)-Cw1a (109 aa).

The first 21 residues, 1 to 21 (MNAVFIVFLSAILSYPHESFA), serve as a signal peptide directing secretion.

It belongs to the scoloptoxin-16 family. Post-translationally, contains 4 disulfide bonds. As to expression, expressed by the venom gland.

It localises to the secreted. This is U-scoloptoxin(16)-Cw1a from Cormocephalus westwoodi (Westwood's green centipede).